The primary structure comprises 267 residues: uncharacterized protein (267 aa).

The WD repeat unit spans residues 50-90; the sequence is PGLNAVTASKFSPDGRWLLNIADGSGYVQLWDTAKGERVKT.

This is an uncharacterized protein from Deinococcus radiodurans (strain ATCC 13939 / DSM 20539 / JCM 16871 / CCUG 27074 / LMG 4051 / NBRC 15346 / NCIMB 9279 / VKM B-1422 / R1).